The sequence spans 182 residues: UPF0423 protein BRA0381/BS1330_II0378 (182 aa).

An N-terminal signal peptide occupies residues 1 to 24 (MKNLFRTAALMVPLSLALAYGAQA).

The protein belongs to the UPF0423 family.

This chain is UPF0423 protein BRA0381/BS1330_II0378, found in Brucella suis biovar 1 (strain 1330).